The following is a 469-amino-acid chain: MVENFSEWFHDILEEANITDSRYPIKGMAVWMPYGFQIRKYTTNLIKEVYDRDHEEVLFPLLVPEAELAKEGLHVKGFEDEVYWVTHGGKTQLNEKLALRPTSETSIYPMYSLWIRSHIDLPLKYYQIVNTFRYETKHTRPLIRVREITTFKEAHTAHASKEEADIQVQEHIENYKEIFDTLGIPYTLTKRPEWDKFPGADYTMAFDAIMPDGKTLQIGTIHNLGQTFAKTFDITFEDKDGEHKLVYQTCAGLSDRVIASAIGIHGDEKGLRLPPEISPKQITIIPILFKKGKEEVLAKCEELKKEFEAAGLRVNIDNRDIRPGKKFYDWELKGTPIKLELGPRDLENNKTIAMRRDQLEKIELDLDENLVSNVIRLIDELNENLAESAKEFHTDHIKFASDIDEVRKLIEEGNVVAVNWCGDTDCGEKIEEITGYSVLGIYEELEEAGKKCILSDEDAKYVALIAKTY.

The protein belongs to the class-II aminoacyl-tRNA synthetase family. ProS type 3 subfamily. Homodimer.

The protein resides in the cytoplasm. The enzyme catalyses tRNA(Pro) + L-proline + ATP = L-prolyl-tRNA(Pro) + AMP + diphosphate. Its function is as follows. Catalyzes the attachment of proline to tRNA(Pro) in a two-step reaction: proline is first activated by ATP to form Pro-AMP and then transferred to the acceptor end of tRNA(Pro). This chain is Proline--tRNA ligase, found in Methanobrevibacter smithii (strain ATCC 35061 / DSM 861 / OCM 144 / PS).